Reading from the N-terminus, the 66-residue chain is Small ribosomal subunit protein eS27 (66 aa).

Zn(2+) is bound by residues Cys-21, Cys-24, Cys-40, and Cys-43. A C4-type zinc finger spans residues 21-43 (CPNCGNEQTVFSHATFPVRCLSC).

This sequence belongs to the eukaryotic ribosomal protein eS27 family. Part of the 30S ribosomal subunit. Zn(2+) serves as cofactor.

The chain is Small ribosomal subunit protein eS27 from Sulfurisphaera tokodaii (strain DSM 16993 / JCM 10545 / NBRC 100140 / 7) (Sulfolobus tokodaii).